Reading from the N-terminus, the 166-residue chain is Large ribosomal subunit protein uL18c (166 aa).

Residues 1-44 (MAAATSLSFFHSTLASSSSSSVQQLSLPPKFVNFRPQTLPLIQA) constitute a chloroplast transit peptide.

The protein belongs to the universal ribosomal protein uL18 family. As to quaternary structure, component of the chloroplast large ribosomal subunit (LSU). Mature 70S chloroplast ribosomes of higher plants consist of a small (30S) and a large (50S) subunit. The 30S small subunit contains 1 molecule of ribosomal RNA (16S rRNA) and 24 different proteins. The 50S large subunit contains 3 rRNA molecules (23S, 5S and 4.5S rRNA) and 33 different proteins.

The protein resides in the plastid. It localises to the chloroplast. Functionally, component of the chloroplast ribosome (chloro-ribosome), a dedicated translation machinery responsible for the synthesis of chloroplast genome-encoded proteins, including proteins of the transcription and translation machinery and components of the photosynthetic apparatus. This Spinacia oleracea (Spinach) protein is Large ribosomal subunit protein uL18c (RPL18).